A 501-amino-acid chain; its full sequence is Ribose import ATP-binding protein RbsA (501 aa).

2 consecutive ABC transporter domains span residues Leu5–Lys241 and Ala252–Leu495. Gly37 to Ser44 provides a ligand contact to ATP.

It belongs to the ABC transporter superfamily. Ribose importer (TC 3.A.1.2.1) family. In terms of assembly, the complex is composed of an ATP-binding protein (RbsA), two transmembrane proteins (RbsC) and a solute-binding protein (RbsB).

It is found in the cell inner membrane. The catalysed reaction is D-ribose(out) + ATP + H2O = D-ribose(in) + ADP + phosphate + H(+). Its function is as follows. Part of the ABC transporter complex RbsABC involved in ribose import. Responsible for energy coupling to the transport system. The polypeptide is Ribose import ATP-binding protein RbsA (Escherichia coli (strain K12)).